We begin with the raw amino-acid sequence, 432 residues long: Metacaspase-1 (432 aa).

Low complexity-rich tracts occupy residues 1–14 (MYPG…NNAG) and 29–59 (QQYG…SQQY). Residues 1-70 (MYPGSGRYTY…PPPGPPPMAY (70 aa)) are disordered. Positions 60 to 70 (APPPGPPPMAY) are enriched in pro residues. Catalysis depends on residues histidine 220 and cysteine 276.

Belongs to the peptidase C14B family.

It is found in the cytoplasm. The protein resides in the nucleus. Its function is as follows. Mediates cell death (apoptosis) triggered by oxygen stress, salt stress or chronological aging. Regulated cell death can prevent a release of toxic cellular components, thus avoiding necrotic collapse of the colony, and can also provide nutrients for healthy cells. Therefore, regulated cell death in yeast colonies can be as important for their development as are apoptosis and related processes that occur within metazoa. In Saccharomyces cerevisiae (strain YJM789) (Baker's yeast), this protein is Metacaspase-1 (MCA1).